A 310-amino-acid chain; its full sequence is Ribosomal RNA small subunit methyltransferase H (310 aa).

Residues 32–34 (AGH), Asp51, Phe84, Asp102, and Gln109 contribute to the S-adenosyl-L-methionine site.

The protein belongs to the methyltransferase superfamily. RsmH family.

It is found in the cytoplasm. It carries out the reaction cytidine(1402) in 16S rRNA + S-adenosyl-L-methionine = N(4)-methylcytidine(1402) in 16S rRNA + S-adenosyl-L-homocysteine + H(+). Specifically methylates the N4 position of cytidine in position 1402 (C1402) of 16S rRNA. This chain is Ribosomal RNA small subunit methyltransferase H, found in Campylobacter hominis (strain ATCC BAA-381 / DSM 21671 / CCUG 45161 / LMG 19568 / NCTC 13146 / CH001A).